The primary structure comprises 396 residues: 3-amino-4-hydroxybenzoate 2-monooxygenase PtmB3 (396 aa).

Residues Ala19, 38 to 39 (EQ), and Arg112 each bind FAD. The Proton acceptor role is filled by Tyr217. Residue Asp295 participates in FAD binding. The disordered stretch occupies residues 352-371 (RERGHEFHLPDGPQQRLRDR).

It belongs to the 6-hydroxynicotinate 3-monooxygenase family. It depends on FAD as a cofactor.

It catalyses the reaction 3-amino-4-hydroxybenzoate + NADPH + O2 + H(+) = 3-amino-2,4-dihydroxybenzoate + NADP(+) + H2O. The protein operates within antibiotic biosynthesis. Functionally, part of a gene cluster involved in the biosynthesis of thioplatensimycin (thioPTM) and platensimycin (PTM), potent and selective inhibitors of bacterial and mammalian fatty acid synthases. Catalyzes the hydroxylation of 3-amino-4-hydroxybenzoate (3,4-AHBA) to 3-amino-2,4-dihydroxybenzoate (3,2,4-ADHBA). The polypeptide is 3-amino-4-hydroxybenzoate 2-monooxygenase PtmB3 (Streptomyces platensis).